Here is a 209-residue protein sequence, read N- to C-terminus: Protein phosphotransferase ChpT (209 aa).

H22 is modified (phosphohistidine).

This sequence belongs to the ChpT phosphotransferase family. Homodimer. Forms an asymmetric heterotetramer with CtrA (2:2). There are at least two modes of interaction between ChpT and CtrA, only one of which is competent to catalyze His-Asp phosphoryl transfer. Post-translationally, is phosphorylated by CckA-P on His-22.

The protein localises to the cytoplasm. Functionally, component of a regulatory phosphorelay system that controls B.abortus cell growth, division, and intracellular survival inside mammalian host cells. This signaling pathway is composed of CckA, ChpT, CtrA and CpdR. ChpT efficiently and specifically shuttles phosphoryl groups from the CckA kinase to the receiver domains of both CtrA and CpdR. Does not bind ATP. Overexpression of chpT results in a defect in cell morphology, DNA content, and intracellular survival in human macrophages. This is Protein phosphotransferase ChpT from Brucella abortus (strain 2308).